The following is a 334-amino-acid chain: Malate dehydrogenase 2 (334 aa).

Residue 12-18 (GAAGRVA) participates in NAD(+) binding. Residues Arg-93 and Arg-99 each coordinate substrate. Residues Asn-106, Gln-113, and 130–132 (VGN) contribute to the NAD(+) site. Residues Asn-132 and Arg-166 each coordinate substrate. His-191 serves as the catalytic Proton acceptor.

This sequence belongs to the LDH/MDH superfamily. MDH type 2 family.

It catalyses the reaction (S)-malate + NAD(+) = oxaloacetate + NADH + H(+). Catalyzes the reversible oxidation of malate to oxaloacetate. This Albidiferax ferrireducens (strain ATCC BAA-621 / DSM 15236 / T118) (Rhodoferax ferrireducens) protein is Malate dehydrogenase 2.